A 514-amino-acid chain; its full sequence is Histidine ammonia-lyase (514 aa).

The segment at residues 143 to 145 (CSG) is a cross-link (5-imidazolinone (Cys-Gly)). 2,3-didehydroalanine (Ser) is present on Ser-144.

The protein belongs to the PAL/histidase family. Contains an active site 4-methylidene-imidazol-5-one (MIO), which is formed autocatalytically by cyclization and dehydration of residues Cys-Ser-Gly.

Its subcellular location is the cytoplasm. The enzyme catalyses L-histidine = trans-urocanate + NH4(+). It participates in amino-acid degradation; L-histidine degradation into L-glutamate; N-formimidoyl-L-glutamate from L-histidine: step 1/3. The protein is Histidine ammonia-lyase (hutH) of Streptomyces griseus.